A 427-amino-acid polypeptide reads, in one-letter code: Adenylosuccinate synthetase (427 aa).

GTP-binding positions include Gly-12–Lys-18 and Gly-40–Thr-42. The Proton acceptor role is filled by Asp-13. Positions 13 and 40 each coordinate Mg(2+). Residues Asp-13–Lys-16, Asn-38–His-41, Thr-128, Arg-142, Gln-223, Thr-238, and Arg-302 contribute to the IMP site. The active-site Proton donor is His-41. Thr-298–Arg-304 contacts substrate. GTP-binding positions include Arg-304, Lys-330–Asp-332, and Ala-412–Gly-414.

This sequence belongs to the adenylosuccinate synthetase family. In terms of assembly, homodimer. The cofactor is Mg(2+).

It is found in the cytoplasm. It catalyses the reaction IMP + L-aspartate + GTP = N(6)-(1,2-dicarboxyethyl)-AMP + GDP + phosphate + 2 H(+). Its pathway is purine metabolism; AMP biosynthesis via de novo pathway; AMP from IMP: step 1/2. Its function is as follows. Plays an important role in the de novo pathway of purine nucleotide biosynthesis. Catalyzes the first committed step in the biosynthesis of AMP from IMP. The chain is Adenylosuccinate synthetase from Desulfitobacterium hafniense (strain DSM 10664 / DCB-2).